A 154-amino-acid polypeptide reads, in one-letter code: Endoribonuclease YbeY (154 aa).

His118, His122, and His128 together coordinate Zn(2+).

It belongs to the endoribonuclease YbeY family. Zn(2+) serves as cofactor.

It localises to the cytoplasm. Single strand-specific metallo-endoribonuclease involved in late-stage 70S ribosome quality control and in maturation of the 3' terminus of the 16S rRNA. This chain is Endoribonuclease YbeY, found in Chloroflexus aurantiacus (strain ATCC 29366 / DSM 635 / J-10-fl).